The primary structure comprises 65 residues: MSTDSLPRSLMEQKAMELQQQLQALLDEIDQNKQESENISRESEYLCQYIGSMMAFQNRQTVPKK.

Residues 8-44 are a coiled coil; sequence RSLMEQKAMELQQQLQALLDEIDQNKQESENISRESE.

This sequence belongs to the SLO1 family.

The sequence is that of SCOCO-like protein 1 from Schizosaccharomyces pombe (strain 972 / ATCC 24843) (Fission yeast).